The chain runs to 127 residues: Fatty acid-binding protein, liver (127 aa).

M1 carries the post-translational modification N-acetylmethionine. K31 and K36 each carry N6-succinyllysine. Phosphoserine is present on S39. K46 bears the N6-succinyllysine mark. S56 is subject to Phosphoserine. An N6-succinyllysine mark is found at K57, K78, and K90. The residue at position 100 (S100) is a Phosphoserine. N105 bears the Deamidated asparagine; alternate mark. Positions 105 to 106 (NG) form a cross-link, isoaspartyl glycine isopeptide (Asn-Gly); alternate. K121 carries the N6-succinyllysine modification.

The protein belongs to the calycin superfamily. Fatty-acid binding protein (FABP) family. Monomer. In terms of processing, deamidation and transpeptidation at the beta carboxyl of Asn-105 forms an isoaspartyl residue and Edman degradation appears as though blocked. This rearrangement gives rise to an extra negative charge carried by the acid form.

It is found in the cytoplasm. Plays a role in lipoprotein-mediated cholesterol uptake in hepatocytes. Binds cholesterol. Binds free fatty acids and their coenzyme A derivatives, bilirubin, and some other small molecules in the cytoplasm. May be involved in intracellular lipid transport. This chain is Fatty acid-binding protein, liver (FABP1), found in Bos taurus (Bovine).